The sequence spans 505 residues: Deoxyguanosinetriphosphate triphosphohydrolase (505 aa).

Residues 66–273 (RLTHSMEVQQ…MEAADDISYC (208 aa)) enclose the HD domain.

This sequence belongs to the dGTPase family. Type 1 subfamily. Homotetramer. The cofactor is Mg(2+).

It catalyses the reaction dGTP + H2O = 2'-deoxyguanosine + triphosphate + H(+). In terms of biological role, dGTPase preferentially hydrolyzes dGTP over the other canonical NTPs. The chain is Deoxyguanosinetriphosphate triphosphohydrolase from Salmonella enteritidis PT4 (strain P125109).